The primary structure comprises 103 residues: UPF0473 protein LCA_0390 (103 aa).

It belongs to the UPF0473 family.

The protein is UPF0473 protein LCA_0390 of Latilactobacillus sakei subsp. sakei (strain 23K) (Lactobacillus sakei subsp. sakei).